We begin with the raw amino-acid sequence, 365 residues long: Serpentine receptor class epsilon-38 (365 aa).

A run of 7 helical transmembrane segments spans residues 26 to 46 (GMYL…GVII), 65 to 85 (IMTA…LLII), 124 to 144 (ALVI…FGIL), 168 to 188 (IPVF…YFVL), 196 to 216 (LGTS…LAVW), 256 to 276 (LVIV…CLVI), and 285 to 305 (IFIH…CSTL).

The protein belongs to the nematode receptor-like protein sre family.

Its subcellular location is the membrane. The polypeptide is Serpentine receptor class epsilon-38 (sre-38) (Caenorhabditis elegans).